A 232-amino-acid chain; its full sequence is Large ribosomal subunit protein uL1 (232 aa).

This sequence belongs to the universal ribosomal protein uL1 family. In terms of assembly, part of the 50S ribosomal subunit.

In terms of biological role, binds directly to 23S rRNA. The L1 stalk is quite mobile in the ribosome, and is involved in E site tRNA release. Protein L1 is also a translational repressor protein, it controls the translation of the L11 operon by binding to its mRNA. This is Large ribosomal subunit protein uL1 from Chlamydia pneumoniae (Chlamydophila pneumoniae).